A 372-amino-acid polypeptide reads, in one-letter code: Silphinene synthase peniA (372 aa).

Residues aspartate 116, glutamate 121, asparagine 263, serine 267, and glutamate 271 each coordinate Mg(2+). Residues aspartate 116–glutamate 121 carry the DDXXE motif motif.

The protein belongs to the terpene synthase family. It depends on Mg(2+) as a cofactor.

The enzyme catalyses (2E,6E)-farnesyl diphosphate = silphinene + diphosphate. Its pathway is secondary metabolite biosynthesis; terpenoid biosynthesis. In terms of biological role, sesquiterpene cyclase; part of the gene cluster that mediates the biosynthesis of penifulvin A, a potent insecticidal sesquiterpene that features a [5.5.5.6]dioxafenestrane ring. Within the pathway, peniA catalyzes the first step and generates the angular triquinane scaffold silphinene via cyclization of the linear farnesyl pyrophosphate (FPP). The cytochrome P450 monooxygenase peniB and the flavin-dependent monooxygenase peniC then catalyze a series of oxidation reactions to transform silphinene into penifulvin A. This chain is Silphinene synthase peniA, found in Penicillium patulum (Penicillium griseofulvum).